Here is a 123-residue protein sequence, read N- to C-terminus: Glycine cleavage system H protein (123 aa).

Residues 23–104 (HWLAGITDHA…PYDAWIFSFE (82 aa)) form the Lipoyl-binding domain. Lys64 is subject to N6-lipoyllysine.

The protein belongs to the GcvH family. As to quaternary structure, the glycine cleavage system is composed of four proteins: P, T, L and H. The cofactor is (R)-lipoate.

Its function is as follows. The glycine cleavage system catalyzes the degradation of glycine. The H protein shuttles the methylamine group of glycine from the P protein to the T protein. This is Glycine cleavage system H protein from Methylobacillus flagellatus (strain ATCC 51484 / DSM 6875 / VKM B-1610 / KT).